Reading from the N-terminus, the 76-residue chain is MLKLRLKKYGRKGQASYRLVVMPSTSKRDGRAIEELGFYNPCTNETHINVERVKVRLSQGVKPTSTVKNLLDKVIF.

The protein belongs to the bacterial ribosomal protein bS16 family.

Its subcellular location is the plastid. It localises to the chloroplast. This Guillardia theta (Cryptophyte) protein is Small ribosomal subunit protein bS16c.